The primary structure comprises 428 residues: Spliceosome RNA helicase DDX39B (428 aa).

Acidic residues predominate over residues 1–19 (MAENDVDNELLDYEEDEVE). Positions 1 to 35 (MAENDVDNELLDYEEDEVENAAGGDGSEAPPKKDV) are disordered. The Q motif motif lies at 45–73 (SGFRDFLLKPELLRAIVDCGFEHPSEVQH). The Helicase ATP-binding domain occupies 76–249 (IPQAILGMDV…RKFMQDPMEI (174 aa)). 89–96 (AKSGMGKT) serves as a coordination point for ATP. The DECD box signature appears at 196–199 (DECD). Residues 261–422 (GLQQYYVKLK…ELPDEIDISS (162 aa)) enclose the Helicase C-terminal domain.

Belongs to the DEAD box helicase family. DECD subfamily. In terms of assembly, component of the transcription/export (TREX) complex at least composed of ALYREF/THOC4, DDX39B, SARNP/CIP29, CHTOP and the THO subcomplex.

Its subcellular location is the nucleus. It localises to the nucleus speckle. It carries out the reaction ATP + H2O = ADP + phosphate + H(+). Involved in nuclear export of spliced and unspliced mRNA. Component of the TREX complex which is thought to couple mRNA transcription, processing and nuclear export, and specifically associates with spliced mRNA and not with unspliced pre-mRNA. The TREX complex is recruited to spliced mRNAs by a transcription-independent mechanism, binds to mRNA upstream of the exon-junction complex (EJC) and is recruited in a splicing- and cap-dependent manner to a region near the 5' end of the mRNA where it functions in mRNA export to the cytoplasm via the TAP/NXF1 pathway. Involved in transcription elongation and genome stability. In terms of biological role, splice factor that is required for the first ATP-dependent step in spliceosome assembly and for the interaction of U2 snRNP with the branchpoint. Has both RNA-stimulated ATP binding/hydrolysis activity and ATP-dependent RNA unwinding activity. Even with the stimulation of RNA, the ATPase activity is weak. Can only hydrolyze ATP but not other NTPs. The RNA stimulation of ATPase activity does not have a strong preference for the sequence and length of the RNA. However, ssRNA stimulates the ATPase activity much more strongly than dsRNA. Can unwind 5' or 3' overhangs or blunt end RNA duplexes in vitro. The ATPase and helicase activities are not influenced by U2AF2; the effect of ALYREF/THOC4 is reported conflictingly. This chain is Spliceosome RNA helicase DDX39B (DDX39B), found in Gallus gallus (Chicken).